The chain runs to 635 residues: Early transcription factor 70 kDa subunit (635 aa).

The Helicase ATP-binding domain maps to 32-185 (RSIIDENKSV…SNIISLMSDE (154 aa)). Position 45–52 (45–52 (HIMGSGKT)) interacts with ATP. The short motif at 135–138 (DEAH) is the DEXH box element. Residues 326 to 505 (KFKYFITKIE…TLPFDIKKLL (180 aa)) form the Helicase C-terminal domain.

This sequence belongs to the helicase family. VETF subfamily. As to quaternary structure, heterodimer of a 70 kDa and a 82 kDa subunit. Part of the early transcription complex composed of ETF, RAP94, and the DNA-directed RNA polymerase.

It is found in the virion. Acts with RNA polymerase to initiate transcription from early gene promoters. Is recruited by the RPO-associated protein of 94 kDa (RAP94) to form the early transcription complex, which also contains the core RNA polymerase. ETF heterodimer binds to early gene promoters. This chain is Early transcription factor 70 kDa subunit (VETFS), found in Oryctolagus cuniculus (Rabbit).